Here is a 243-residue protein sequence, read N- to C-terminus: Biosynthetic peptidoglycan transglycosylase (243 aa).

Residues 22–42 traverse the membrane as a helical segment; that stretch reads LIVLLVLALMSVLQVIVFRFV.

The protein belongs to the glycosyltransferase 51 family.

The protein localises to the cell inner membrane. The enzyme catalyses [GlcNAc-(1-&gt;4)-Mur2Ac(oyl-L-Ala-gamma-D-Glu-L-Lys-D-Ala-D-Ala)](n)-di-trans,octa-cis-undecaprenyl diphosphate + beta-D-GlcNAc-(1-&gt;4)-Mur2Ac(oyl-L-Ala-gamma-D-Glu-L-Lys-D-Ala-D-Ala)-di-trans,octa-cis-undecaprenyl diphosphate = [GlcNAc-(1-&gt;4)-Mur2Ac(oyl-L-Ala-gamma-D-Glu-L-Lys-D-Ala-D-Ala)](n+1)-di-trans,octa-cis-undecaprenyl diphosphate + di-trans,octa-cis-undecaprenyl diphosphate + H(+). It participates in cell wall biogenesis; peptidoglycan biosynthesis. In terms of biological role, peptidoglycan polymerase that catalyzes glycan chain elongation from lipid-linked precursors. In Xylella fastidiosa (strain 9a5c), this protein is Biosynthetic peptidoglycan transglycosylase.